A 957-amino-acid polypeptide reads, in one-letter code: Receptor-like protein 53 (957 aa).

The N-terminal stretch at 1-30 (MEGFWNSKSIIRITLSFIFLFICHFLDVLA) is a signal peptide. Residues 31-910 (APTRNLCRPE…EEEDEDLISW (880 aa)) are Extracellular-facing. N-linked (GlcNAc...) asparagine glycosylation is found at N78, N114, N143, N167, and N191. LRR repeat units lie at residues 120-143 (LHFL…SIEN), 144-170 (LSHL…NLSR), 172-192 (TYLN…ICNL), 193-216 (SHLT…IGGL), 217-240 (SHLT…IGNL), 241-266 (SNLT…NLSQ), 268-287 (TFLG…SFGN), 288-312 (LNQL…LLNL), 313-336 (TGLS…ITSL), 338-360 (NLMD…LFTI), 361-384 (PSLT…NISS), and 386-409 (SNLY…ISKL). 4 N-linked (GlcNAc...) asparagine glycosylation sites follow: N239, N242, N252, and N263. N311 and N332 each carry an N-linked (GlcNAc...) asparagine glycan. The N-linked (GlcNAc...) asparagine glycan is linked to N381. The stretch at 412–433 (LFRLDISHLNTQGPVDFSIFSH) is one LRR 13; degenerate repeat. LRR repeat units follow at residues 434 to 458 (LKSL…YFLS), 460 to 483 (FKRL…SVSD), 486 to 509 (SQLI…VRTQ), 510 to 533 (HELG…LWRL), 535 to 556 (ILYY…SKPE), 558 to 580 (SLLY…ICGL), 581 to 604 (RSLN…MGHL), 605 to 629 (KSTL…IFEI), 631 to 651 (RSLD…LSFF), 652 to 674 (STLE…WLSS), 675 to 697 (LPKL…EATF), 698 to 721 (PELR…YFVK), 765 to 789 (LTIY…IGLL), 790 to 813 (KELL…MGNL), 814 to 837 (TALE…LGDL), and 839 to 862 (FLAY…QFLT). N-linked (GlcNAc...) asparagine glycosylation is found at N441, N446, and N477. N540 and N543 each carry an N-linked (GlcNAc...) asparagine glycan. N594 carries an N-linked (GlcNAc...) asparagine glycan. Residue N665 is glycosylated (N-linked (GlcNAc...) asparagine). An N-linked (GlcNAc...) asparagine glycan is attached at N711. N812 carries an N-linked (GlcNAc...) asparagine glycan. Residues N844 and N864 are each glycosylated (N-linked (GlcNAc...) asparagine). Residues 911–931 (IAAAIGFGPGIAFGLMFGYIL) traverse the membrane as a helical segment. The Cytoplasmic segment spans residues 932 to 957 (VSYKPEWFMNPFDRNNRRQKRHKTTH).

The protein belongs to the RLP family.

The protein localises to the cell membrane. The polypeptide is Receptor-like protein 53 (Arabidopsis thaliana (Mouse-ear cress)).